Reading from the N-terminus, the 267-residue chain is Tryptophan synthase alpha chain (267 aa).

Residues glutamate 49 and aspartate 60 each act as proton acceptor in the active site.

The protein belongs to the TrpA family. In terms of assembly, tetramer of two alpha and two beta chains.

The catalysed reaction is (1S,2R)-1-C-(indol-3-yl)glycerol 3-phosphate + L-serine = D-glyceraldehyde 3-phosphate + L-tryptophan + H2O. Its pathway is amino-acid biosynthesis; L-tryptophan biosynthesis; L-tryptophan from chorismate: step 5/5. Its function is as follows. The alpha subunit is responsible for the aldol cleavage of indoleglycerol phosphate to indole and glyceraldehyde 3-phosphate. The protein is Tryptophan synthase alpha chain of Chloroflexus aggregans (strain MD-66 / DSM 9485).